The chain runs to 212 residues: ATP phosphoribosyltransferase (212 aa).

Belongs to the ATP phosphoribosyltransferase family. Short subfamily. In terms of assembly, heteromultimer composed of HisG and HisZ subunits.

The protein localises to the cytoplasm. The catalysed reaction is 1-(5-phospho-beta-D-ribosyl)-ATP + diphosphate = 5-phospho-alpha-D-ribose 1-diphosphate + ATP. Its pathway is amino-acid biosynthesis; L-histidine biosynthesis; L-histidine from 5-phospho-alpha-D-ribose 1-diphosphate: step 1/9. Functionally, catalyzes the condensation of ATP and 5-phosphoribose 1-diphosphate to form N'-(5'-phosphoribosyl)-ATP (PR-ATP). Has a crucial role in the pathway because the rate of histidine biosynthesis seems to be controlled primarily by regulation of HisG enzymatic activity. The sequence is that of ATP phosphoribosyltransferase from Prochlorococcus marinus (strain MIT 9312).